Consider the following 736-residue polypeptide: MSNIISQAGQKAKEALTSAPSSKKVDDLKNEFKETDKSARLTTDYGVKQTTADDWLRIVSDDKIGPSLLEDPFARERIMRFDHERIPERVVHARGSGAFGKFKVYESASDLTMAPVLTDTSRETPVFVRFSTVLGSRGSADTVRDVRGFAVKFYTEEGNWDLVGNNIPVFFIQDAIKFPDVIHAGKPEPHNEVPQAQSAHNNFWDFQFNHTEATHMFTWAMSDRAIPRSLRMMQGFGVNTYTLINAQGKRHFVKFHWTPELGVHSLVWDEALKLAGQDPDFHRKDLWEAIENGAYPKWKFGIQAIAEEDEHKFDFDILDATKIWPEDLVPVRYIGEMELNRNPDEFFPQTEQIAFCTSHVVNGIGFSDDPLLQGRNFSYFDTQISRLGVNFQELPINRPVCPVMNFNRDGAMRHTISRGTVNYYPNRFDACPPASLKEGGYLEYAQKVAGIKARARSAKFKEHFSQAQLFYNSMSPIEKQHMINAFGFELDHCEDPVVYGRMVQRLADIDLGLAQTIAEMVGGEAPTTTNHPNHGRKTINLSQTEFPPATPTIKSRRVAIIIADGYDNVAYDAAYAAISANQAIPLVIGPRRSKVTAANGSTVQPHHHLEGFRSTMVDAIFIPGGAKAAETLSKNGRALHWIREAFGHLKAIGATGEAVDLVAKAIALPQVTVSSEAEVHESYGVVTLKKVKPESFTDAVKIAKGAAGFLGEFFYAIAQHRNWDRELDGLHSMIAY.

The disordered stretch occupies residues 1 to 29 (MSNIISQAGQKAKEALTSAPSSKKVDDLK). Arg89 is a binding site for heme. His92 is an active-site residue. Arg129 contributes to the heme binding site. Asn165 is an active-site residue. Phe178, Arg375, Tyr379, and Arg386 together coordinate heme. Positions 356-379 (CTSHVVNGIGFSDDPLLQGRNFSY) form a cross-link, 3-(S-cysteinyl)-tyrosine (Cys-Tyr).

It belongs to the catalase family. In terms of assembly, homotetramer. Requires heme as cofactor. In terms of processing, glycosylated; with alpha-glucose and/or alpha-mannose.

It is found in the secreted. The protein resides in the cell wall. The enzyme catalyses 2 H2O2 = O2 + 2 H2O. In terms of biological role, occurs in almost all aerobically respiring organisms and serves to protect cells from the toxic effects of hydrogen peroxide. In Neurospora crassa (strain ATCC 24698 / 74-OR23-1A / CBS 708.71 / DSM 1257 / FGSC 987), this protein is Catalase-1 (cat-1).